The primary structure comprises 317 residues: L-lactate dehydrogenase (317 aa).

Residues Val-17, Asp-38, Lys-43, Tyr-69, and 83–84 (GA) contribute to the NAD(+) site. Substrate is bound by residues Gln-86 and Arg-92. NAD(+) contacts are provided by residues Ser-105, 122–124 (ATN), and Ser-147. A substrate-binding site is contributed by 124–127 (NPVD). 152 to 155 (DTAR) is a substrate binding site. Beta-D-fructose 1,6-bisphosphate contacts are provided by Arg-157 and His-172. His-179 functions as the Proton acceptor in the catalytic mechanism. Tyr-224 is subject to Phosphotyrosine. Substrate is bound at residue Thr-233.

Belongs to the LDH/MDH superfamily. LDH family. In terms of assembly, homotetramer.

Its subcellular location is the cytoplasm. It catalyses the reaction (S)-lactate + NAD(+) = pyruvate + NADH + H(+). The protein operates within fermentation; pyruvate fermentation to lactate; (S)-lactate from pyruvate: step 1/1. With respect to regulation, allosterically activated by fructose 1,6-bisphosphate (FBP). Catalyzes the conversion of lactate to pyruvate. This is L-lactate dehydrogenase from Bacillus caldolyticus.